Consider the following 166-residue polypeptide: NAD(P)H-quinone oxidoreductase subunit I, chloroplastic (166 aa).

4Fe-4S ferredoxin-type domains are found at residues 55–84 (GRIH…VDWK) and 95–124 (LNYS…MTEE). Cys64, Cys67, Cys70, Cys74, Cys104, Cys107, Cys110, and Cys114 together coordinate [4Fe-4S] cluster.

It belongs to the complex I 23 kDa subunit family. As to quaternary structure, NDH is composed of at least 16 different subunits, 5 of which are encoded in the nucleus. [4Fe-4S] cluster is required as a cofactor.

The protein resides in the plastid. It localises to the chloroplast thylakoid membrane. It catalyses the reaction a plastoquinone + NADH + (n+1) H(+)(in) = a plastoquinol + NAD(+) + n H(+)(out). The enzyme catalyses a plastoquinone + NADPH + (n+1) H(+)(in) = a plastoquinol + NADP(+) + n H(+)(out). NDH shuttles electrons from NAD(P)H:plastoquinone, via FMN and iron-sulfur (Fe-S) centers, to quinones in the photosynthetic chain and possibly in a chloroplast respiratory chain. The immediate electron acceptor for the enzyme in this species is believed to be plastoquinone. Couples the redox reaction to proton translocation, and thus conserves the redox energy in a proton gradient. This chain is NAD(P)H-quinone oxidoreductase subunit I, chloroplastic, found in Lactuca sativa (Garden lettuce).